We begin with the raw amino-acid sequence, 556 residues long: 2-succinyl-5-enolpyruvyl-6-hydroxy-3-cyclohexene-1-carboxylate synthase (556 aa).

It belongs to the TPP enzyme family. MenD subfamily. As to quaternary structure, homodimer. Mg(2+) serves as cofactor. Mn(2+) is required as a cofactor. The cofactor is thiamine diphosphate.

The enzyme catalyses isochorismate + 2-oxoglutarate + H(+) = 5-enolpyruvoyl-6-hydroxy-2-succinyl-cyclohex-3-ene-1-carboxylate + CO2. Its pathway is quinol/quinone metabolism; 1,4-dihydroxy-2-naphthoate biosynthesis; 1,4-dihydroxy-2-naphthoate from chorismate: step 2/7. It functions in the pathway quinol/quinone metabolism; menaquinone biosynthesis. Functionally, catalyzes the thiamine diphosphate-dependent decarboxylation of 2-oxoglutarate and the subsequent addition of the resulting succinic semialdehyde-thiamine pyrophosphate anion to isochorismate to yield 2-succinyl-5-enolpyruvyl-6-hydroxy-3-cyclohexene-1-carboxylate (SEPHCHC). The polypeptide is 2-succinyl-5-enolpyruvyl-6-hydroxy-3-cyclohexene-1-carboxylate synthase (Staphylococcus epidermidis (strain ATCC 35984 / DSM 28319 / BCRC 17069 / CCUG 31568 / BM 3577 / RP62A)).